Here is a 601-residue protein sequence, read N- to C-terminus: NADH-quinone oxidoreductase subunit C/D (601 aa).

Positions 1 to 191 are NADH dehydrogenase I subunit C; sequence MKLTRDFPHN…DPFMLDAAKQ (191 aa). The interval 215-601 is NADH dehydrogenase I subunit D; the sequence is DYMFLNLGPN…IDFVMSDVDR (387 aa).

In the N-terminal section; belongs to the complex I 30 kDa subunit family. It in the C-terminal section; belongs to the complex I 49 kDa subunit family. In terms of assembly, NDH-1 is composed of 13 different subunits. Subunits NuoB, CD, E, F, and G constitute the peripheral sector of the complex.

Its subcellular location is the cell inner membrane. It carries out the reaction a quinone + NADH + 5 H(+)(in) = a quinol + NAD(+) + 4 H(+)(out). In terms of biological role, NDH-1 shuttles electrons from NADH, via FMN and iron-sulfur (Fe-S) centers, to quinones in the respiratory chain. The immediate electron acceptor for the enzyme in this species is believed to be ubiquinone. Couples the redox reaction to proton translocation (for every two electrons transferred, four hydrogen ions are translocated across the cytoplasmic membrane), and thus conserves the redox energy in a proton gradient. The polypeptide is NADH-quinone oxidoreductase subunit C/D (Shewanella oneidensis (strain ATCC 700550 / JCM 31522 / CIP 106686 / LMG 19005 / NCIMB 14063 / MR-1)).